Reading from the N-terminus, the 156-residue chain is Cyclic pyranopterin monophosphate synthase (156 aa).

Substrate is bound by residues 75–77 and 111–112; these read LCH and ME. The active site involves Asp126.

It belongs to the MoaC family. As to quaternary structure, homohexamer; trimer of dimers.

The enzyme catalyses (8S)-3',8-cyclo-7,8-dihydroguanosine 5'-triphosphate = cyclic pyranopterin phosphate + diphosphate. It participates in cofactor biosynthesis; molybdopterin biosynthesis. In terms of biological role, catalyzes the conversion of (8S)-3',8-cyclo-7,8-dihydroguanosine 5'-triphosphate to cyclic pyranopterin monophosphate (cPMP). The polypeptide is Cyclic pyranopterin monophosphate synthase (Erythrobacter litoralis (strain HTCC2594)).